A 601-amino-acid chain; its full sequence is Kelch-like protein 3 (601 aa).

The BTB domain maps to 63 to 130; sequence CDVLLVAGEV…IYSAEIEVSE (68 aa). The BACK domain maps to 165–268; sequence CLGIRAFADL…SRDYLVQIVE (104 aa). Kelch repeat units follow at residues 316 to 361, 362 to 408, 410 to 455, 456 to 504, 505 to 551, and 553 to 599; these read VMMV…YMAG, KVYA…VLGD, LYAV…VVDG, KLYA…VLSG, QLYA…AING, and LYVI…VIDK.

This sequence belongs to the KLHL3 family. In terms of assembly, component of the BCR(KLHL3) E3 ubiquitin ligase complex, at least composed of cul3 and klhl3 and rbx1.

The protein resides in the cytoplasm. It is found in the cytoskeleton. It localises to the cytosol. The protein operates within protein modification; protein ubiquitination. Substrate-specific adapter of a BCR (BTB-CUL3-RBX1) E3 ubiquitin ligase complex that acts as a regulator of ion transport in the distal nephron. The BCR(KLHL3) complex acts by mediating ubiquitination and degradation of WNK1 and WNK4, two activators of Na-Cl cotransporter SLC12A3/NCC in distal convoluted tubule cells of kidney, thereby regulating NaCl reabsorption. This is Kelch-like protein 3 (klhl3) from Danio rerio (Zebrafish).